Reading from the N-terminus, the 263-residue chain is Endonuclease 8 (263 aa).

The active-site Schiff-base intermediate with DNA is the Pro2. The active-site Proton donor is the Glu3. Lys53 (proton donor; for beta-elimination activity) is an active-site residue. Positions 70, 125, and 169 each coordinate DNA. The FPG-type zinc-finger motif lies at 229 to 263 (KVFHRDGEACERCGGIIEKTTLSSRPFYWCPHCQK). The Proton donor; for delta-elimination activity role is filled by Arg253.

The protein belongs to the FPG family. Requires Zn(2+) as cofactor.

The enzyme catalyses 2'-deoxyribonucleotide-(2'-deoxyribose 5'-phosphate)-2'-deoxyribonucleotide-DNA = a 3'-end 2'-deoxyribonucleotide-(2,3-dehydro-2,3-deoxyribose 5'-phosphate)-DNA + a 5'-end 5'-phospho-2'-deoxyribonucleoside-DNA + H(+). In terms of biological role, involved in base excision repair of DNA damaged by oxidation or by mutagenic agents. Acts as a DNA glycosylase that recognizes and removes damaged bases. Has a preference for oxidized pyrimidines, such as thymine glycol, 5,6-dihydrouracil and 5,6-dihydrothymine. Has AP (apurinic/apyrimidinic) lyase activity and introduces nicks in the DNA strand. Cleaves the DNA backbone by beta-delta elimination to generate a single-strand break at the site of the removed base with both 3'- and 5'-phosphates. The protein is Endonuclease 8 of Salmonella agona (strain SL483).